Here is a 408-residue protein sequence, read N- to C-terminus: tRNA pseudouridine synthase D (408 aa).

Aspartate 82 functions as the Nucleophile in the catalytic mechanism. The TRUD domain maps to 157–367 (GVPNRFGEQR…MEGERRPLRV (211 aa)).

Belongs to the pseudouridine synthase TruD family.

The enzyme catalyses uridine(13) in tRNA = pseudouridine(13) in tRNA. Its function is as follows. Responsible for synthesis of pseudouridine from uracil-13 in transfer RNAs. The protein is tRNA pseudouridine synthase D of Geobacter sulfurreducens (strain ATCC 51573 / DSM 12127 / PCA).